The sequence spans 291 residues: Protease HtpX homolog (291 aa).

Transmembrane regions (helical) follow at residues 4 to 24 (ILLFVLTNVAVVAVLGIVASL) and 39 to 59 (GSLLGFALVIGFGGAIISLLI). Zn(2+) is bound at residue histidine 144. Glutamate 145 is a catalytic residue. Histidine 148 serves as a coordination point for Zn(2+). Transmembrane regions (helical) follow at residues 159–179 (LIQGVMNTFVVFLSRVIAFAI) and 199–219 (ITTVVLDIVLGFAAAIVVAWF). Glutamate 224 contributes to the Zn(2+) binding site.

This sequence belongs to the peptidase M48B family. The cofactor is Zn(2+).

It localises to the cell inner membrane. The sequence is that of Protease HtpX homolog from Albidiferax ferrireducens (strain ATCC BAA-621 / DSM 15236 / T118) (Rhodoferax ferrireducens).